Here is an 858-residue protein sequence, read N- to C-terminus: Selenocysteine insertion sequence-binding protein 2 (858 aa).

Disordered stretches follow at residues 127–261, 275–296, and 327–625; these read KPRH…GDVG, SDHT…CTQE, and LKKT…DSAT. Composition is skewed to basic and acidic residues over residues 147 to 166, 188 to 197, and 215 to 224; these read KPSD…RRAD, SSLKSDGYHK, and PEFEFSRLDF. Composition is skewed to polar residues over residues 281-296 and 327-352; these read AVTS…CTQE and LKKT…NPSY. The Nuclear localization signal signature appears at 380–387; sequence KNKKKKEK. The segment covering 418–429 has biased composition (basic residues); the sequence is RRHRGQSPKLHS. Residues 430-447 show a composition bias toward polar residues; the sequence is KQQTQNEFKTSGKKSQVP. Residues 539 to 548 show a composition bias toward basic and acidic residues; the sequence is ILKERQERMQ. 2 stretches are compositionally biased toward polar residues: residues 554-563 and 571-582; these read SAVSLTVASD and GASNQTPSQDNP. The RNA-binding stretch occupies residues 678 to 699; sequence LVLGLREVLKHLKLRKLKCIII. Residues 785–819 form a disordered region; it reads MRQEQAGEPGPQSPPSPPMQDPIPSTEEGTLPSTG. Positions 795–805 are enriched in pro residues; that stretch reads PQSPPSPPMQD.

The protein resides in the cytoplasm. Its subcellular location is the nucleus. MRNA-binding protein that binds to the SECIS (selenocysteine insertion sequence) element present in the 3'-UTR of mRNAs encoding selenoproteins and facilitates the incorporation of the rare amino acid selenocysteine. Insertion of selenocysteine at UGA codons is mediated by SECISBP2 and EEFSEC: SECISBP2 (1) specifically binds the SECIS sequence once the 80S ribosome encounters an in-frame UGA codon and (2) contacts the RPS27A/eS31 of the 40S ribosome before ribosome stalling. (3) GTP-bound EEFSEC then delivers selenocysteinyl-tRNA(Sec) to the 80S ribosome and adopts a preaccommodated state conformation. (4) After GTP hydrolysis, EEFSEC dissociates from the assembly, selenocysteinyl-tRNA(Sec) accommodates, and peptide bond synthesis and selenoprotein elongation occur. The sequence is that of Selenocysteine insertion sequence-binding protein 2 from Mus musculus (Mouse).